A 134-amino-acid polypeptide reads, in one-letter code: MKKTPLLNIALSRLIASLGHGDIVVIGDAGLPVPPGVELIDLALTHGVPDFLTTLKVLLSEMQVERHVLAEEILLKQPTPLAALEGMTAGGELGQRQLMNHEDFKVLSRQARAVIRTGECQPYCNIALIAGVTF.

The active-site Proton donor is the histidine 20. Residues aspartate 28, histidine 101, and 123–125 (YCN) contribute to the substrate site.

This sequence belongs to the RbsD / FucU family. RbsD subfamily. Homodecamer.

The protein localises to the cytoplasm. The catalysed reaction is beta-D-ribopyranose = beta-D-ribofuranose. The protein operates within carbohydrate metabolism; D-ribose degradation; D-ribose 5-phosphate from beta-D-ribopyranose: step 1/2. Catalyzes the interconversion of beta-pyran and beta-furan forms of D-ribose. In Pseudomonas fluorescens (strain ATCC BAA-477 / NRRL B-23932 / Pf-5), this protein is D-ribose pyranase.